Here is a 446-residue protein sequence, read N- to C-terminus: sn-2 acyl-lipid omega-3 desaturase (ferredoxin), chloroplastic (446 aa).

The N-terminal 65 residues, 1-65, are a transit peptide targeting the chloroplast; sequence MANLVLSECG…DGFTRNWALN (65 aa). A run of 2 helical transmembrane segments spans residues 118–138 and 141–161; these read LSYVVRDVAIVFALAAGAAYL and WIVWPLYWLAQGTMFWALFVL. The Histidine box-1 signature appears at 163–167; sequence HDCGH. A Histidine box-2 motif is present at residues 199–203; sequence HRTHH. 3 helical membrane-spanning segments follow: residues 231–250, 279–299, and 302–322; these read RFFRFTLPLVMLAYPFYLWA, TACWTAMAALLVCLNFTIGPI, and LKLYGIPYWINVMWLDFVTYL. The Histidine box-3 motif lies at 366-370; that stretch reads HVIHH.

The protein belongs to the fatty acid desaturase type 1 family. Most abundant in leaves and seedlings.

It localises to the plastid. Its subcellular location is the chloroplast inner membrane. It catalyses the reaction a (7Z,10Z)-hexadecadienoyl-containing glycerolipid + 2 reduced [2Fe-2S]-[ferredoxin] + O2 + 2 H(+) = a (7Z,10Z,13Z)-hexadecatrienoyl-containing glycerolipid + 2 oxidized [2Fe-2S]-[ferredoxin] + 2 H2O. The catalysed reaction is a (9Z,12Z)-octadecadienoyl-containing glycerolipid + 2 reduced [2Fe-2S]-[ferredoxin] + O2 + 2 H(+) = (9Z,12Z,15Z)-octadecatrienoyl-containing glycerolipid + 2 oxidized [2Fe-2S]-[ferredoxin] + 2 H2O. It functions in the pathway lipid metabolism; polyunsaturated fatty acid biosynthesis. Functionally, chloroplast omega-3 fatty acid desaturase introduces the third double bond in the biosynthesis of 16:3 and 18:3 fatty acids, important constituents of plant membranes. It is thought to use ferredoxin as an electron donor and to act on fatty acids esterified to galactolipids, sulfolipids and phosphatidylglycerol. The protein is sn-2 acyl-lipid omega-3 desaturase (ferredoxin), chloroplastic of Arabidopsis thaliana (Mouse-ear cress).